The sequence spans 331 residues: Holliday junction branch migration complex subunit RuvB (331 aa).

The interval 1–182 is large ATPase domain (RuvB-L); the sequence is MSNDTLHKYE…FGIPLHLEFY (182 aa). ATP is bound by residues Leu21, Arg22, Gly63, Lys66, Thr67, Thr68, 129-131, Arg172, Tyr182, and Arg219; that span reads EDY. Thr67 contacts Mg(2+). Residues 183–254 form a small ATPAse domain (RuvB-S) region; it reads SVDELVLVIK…FANSALFRLG (72 aa). The head domain (RuvB-H) stretch occupies residues 257-331; that stretch reads GAGFDKMDLK…FEYLLSSKYI (75 aa). DNA contacts are provided by Arg310 and Arg315.

This sequence belongs to the RuvB family. Homohexamer. Forms an RuvA(8)-RuvB(12)-Holliday junction (HJ) complex. HJ DNA is sandwiched between 2 RuvA tetramers; dsDNA enters through RuvA and exits via RuvB. An RuvB hexamer assembles on each DNA strand where it exits the tetramer. Each RuvB hexamer is contacted by two RuvA subunits (via domain III) on 2 adjacent RuvB subunits; this complex drives branch migration. In the full resolvosome a probable DNA-RuvA(4)-RuvB(12)-RuvC(2) complex forms which resolves the HJ.

It is found in the cytoplasm. The catalysed reaction is ATP + H2O = ADP + phosphate + H(+). Its function is as follows. The RuvA-RuvB-RuvC complex processes Holliday junction (HJ) DNA during genetic recombination and DNA repair, while the RuvA-RuvB complex plays an important role in the rescue of blocked DNA replication forks via replication fork reversal (RFR). RuvA specifically binds to HJ cruciform DNA, conferring on it an open structure. The RuvB hexamer acts as an ATP-dependent pump, pulling dsDNA into and through the RuvAB complex. RuvB forms 2 homohexamers on either side of HJ DNA bound by 1 or 2 RuvA tetramers; 4 subunits per hexamer contact DNA at a time. Coordinated motions by a converter formed by DNA-disengaged RuvB subunits stimulates ATP hydrolysis and nucleotide exchange. Immobilization of the converter enables RuvB to convert the ATP-contained energy into a lever motion, pulling 2 nucleotides of DNA out of the RuvA tetramer per ATP hydrolyzed, thus driving DNA branch migration. The RuvB motors rotate together with the DNA substrate, which together with the progressing nucleotide cycle form the mechanistic basis for DNA recombination by continuous HJ branch migration. Branch migration allows RuvC to scan DNA until it finds its consensus sequence, where it cleaves and resolves cruciform DNA. The protein is Holliday junction branch migration complex subunit RuvB of Anaplasma marginale (strain Florida).